Reading from the N-terminus, the 182-residue chain is MIKGAVAARYAQALFDVARDNNRIAETENELRGFMRLLDESRDLQQVLYNPQVPVELKKEIVREAFGKELSGTTLNFLCLVLDRRREVYLKGIADHFIALANETRNIIEAEVTSALELSVVHKVNLMQVLSRMTGKELRIRYQVDPDIIGGLVVRLGDRIIDGSIKRQLERLKDSIRETKVG.

It belongs to the ATPase delta chain family. As to quaternary structure, F-type ATPases have 2 components, F(1) - the catalytic core - and F(0) - the membrane proton channel. F(1) has five subunits: alpha(3), beta(3), gamma(1), delta(1), epsilon(1). F(0) has three main subunits: a(1), b(2) and c(10-14). The alpha and beta chains form an alternating ring which encloses part of the gamma chain. F(1) is attached to F(0) by a central stalk formed by the gamma and epsilon chains, while a peripheral stalk is formed by the delta and b chains.

The protein localises to the cell membrane. In terms of biological role, f(1)F(0) ATP synthase produces ATP from ADP in the presence of a proton or sodium gradient. F-type ATPases consist of two structural domains, F(1) containing the extramembraneous catalytic core and F(0) containing the membrane proton channel, linked together by a central stalk and a peripheral stalk. During catalysis, ATP synthesis in the catalytic domain of F(1) is coupled via a rotary mechanism of the central stalk subunits to proton translocation. This protein is part of the stalk that links CF(0) to CF(1). It either transmits conformational changes from CF(0) to CF(1) or is implicated in proton conduction. The protein is ATP synthase subunit delta of Desulforudis audaxviator (strain MP104C).